Here is a 153-residue protein sequence, read N- to C-terminus: Transcriptional repressor NrdR (153 aa).

Residues 1 to 22 (MRCPACHHNGTRVLDSRPAHEG) form a disordered region. A zinc finger lies at 3 to 34 (CPACHHNGTRVLDSRPAHEGRSIRRRRECESC). The ATP-cone domain maps to 49-139 (LIVVKKDGTR…VYRQFKDINV (91 aa)).

Belongs to the NrdR family. The cofactor is Zn(2+).

Its function is as follows. Negatively regulates transcription of bacterial ribonucleotide reductase nrd genes and operons by binding to NrdR-boxes. This chain is Transcriptional repressor NrdR, found in Halalkalibacterium halodurans (strain ATCC BAA-125 / DSM 18197 / FERM 7344 / JCM 9153 / C-125) (Bacillus halodurans).